The chain runs to 942 residues: PH and SEC7 domain-containing protein C11E3.11c (942 aa).

The span at 1–18 (MSRNASNAYLKNGNSTPS) shows a compositional bias: polar residues. Disordered regions lie at residues 1–128 (MSRN…TRLN) and 259–308 (SRNL…ETTR). Positions 24-40 (PSSLSQRSKTSTRSSKP) are enriched in low complexity. 4 stretches are compositionally biased toward polar residues: residues 50 to 60 (WFKNESSSRHP), 90 to 125 (ASMS…SSRT), 271 to 284 (YGNS…SSNY), and 292 to 305 (NRQS…STSE). The SEC7 domain occupies 295-497 (SSLSIPKSTS…LSSYKSFASN (203 aa)). Residues 681 to 804 (PYIKQGILKF…WIDALNYWAA (124 aa)) enclose the PH domain.

The chain is PH and SEC7 domain-containing protein C11E3.11c from Schizosaccharomyces pombe (strain 972 / ATCC 24843) (Fission yeast).